The following is a 913-amino-acid chain: Epithelial discoidin domain-containing receptor 1 (913 aa).

A signal peptide spans 1–18 (MGPEALSSLLLLLLVASG). Residues 21–417 (DMKGHFDPAK…VAKAEGSPTA (397 aa)) are Extracellular-facing. Positions 31–185 (CRYALGMQDR…VCLRVELYGC (155 aa)) constitute an F5/8 type C domain. 2 disulfides stabilise this stretch: Cys-31-Cys-185 and Cys-74-Cys-177. Residues 192-367 (LSYTAPVGQT…LFSEISFISD (176 aa)) form a DS-like domain region. Ca(2+) is bound by residues Asn-211, Gln-230, Asp-233, Val-235, Tyr-253, and Tyr-255. Asn-211 carries an N-linked (GlcNAc...) asparagine glycan. Residue Asn-260 is glycosylated (N-linked (GlcNAc...) asparagine). Residues Cys-303 and Cys-348 are joined by a disulfide bond. Residues Ser-360 and Glu-361 each contribute to the Ca(2+) site. 2 N-linked (GlcNAc...) asparagine glycosylation sites follow: Asn-370 and Asn-394. A helical membrane pass occupies residues 418–438 (ILIGCLVAIILLLLLIIALML). Residues 439–913 (WRLHWRRLLS…FLAEDALNTV (475 aa)) lie on the Cytoplasmic side of the membrane. The segment at 470–499 (ILINNRPGPREPPPYQEPRPRGNPPHSAPC) is disordered. A compositionally biased stretch (pro residues) spans 479 to 496 (REPPPYQEPRPRGNPPHS). The PPxY motif motif lies at 481 to 484 (PPPY). A phosphotyrosine; by autocatalysis mark is found at Tyr-484, Tyr-513, and Tyr-520. The Protein kinase domain occupies 610 to 905 (LRFKEKLGEG…PPFSQLHRFL (296 aa)). Residue 616 to 624 (LGEGQFGEV) coordinates ATP. Position 631 is a phosphoserine (Ser-631). An ATP-binding site is contributed by Lys-655. Residue Tyr-740 is modified to Phosphotyrosine; by autocatalysis. Asp-766 serves as the catalytic Proton acceptor. Tyr-792, Tyr-796, and Tyr-797 each carry phosphotyrosine; by autocatalysis.

The protein belongs to the protein kinase superfamily. Tyr protein kinase family. Insulin receptor subfamily. Homodimer. Interacts (via PPxY motif) with WWC1 (via WW domains) in a collagen-regulated manner. Forms a tripartite complex with WWC1 and PRKCZ, but predominantly in the absence of collagen. Interacts (tyrosine phosphorylated) with SHC1. Interacts with SRC. Interacts with MYH9. Interacts with CDH1. Interacts with PTPN11. Interacts with NCK2. Post-translationally, autophosphorylated in response to fibrillar collagen binding. In terms of processing, glycosylation of Asn-211, but apparently not of Asn-260 or Asn-394, prevents autophosphorylation from occurring in the absence of collagen. Detected in T-47D, MDA-MB-175 and HBL-100 breast carcinoma cells, A-431 epidermoid carcinoma cells, SW48 and SNU-C2B colon carcinoma cells and Hs 294T melanoma cells (at protein level). Expressed at low levels in most adult tissues and is highest in the brain, lung, placenta and kidney. Lower levels of expression are detected in melanocytes, heart, liver, skeletal muscle and pancreas. Abundant in breast carcinoma cell lines. In the colonic mucosa, expressed in epithelia but not in the connective tissue of the lamina propria. In the thyroid gland, expressed in the epithelium of the thyroid follicles. In pancreas, expressed in the islets of Langerhans cells, but not in the surrounding epithelial cells of the exocrine pancreas. In kidney, expressed in the epithelia of the distal tubules. Not expressed in connective tissue, endothelial cells, adipose tissue, muscle cells or cells of hematopoietic origin.

Its subcellular location is the cell membrane. The protein resides in the secreted. The enzyme catalyses L-tyrosyl-[protein] + ATP = O-phospho-L-tyrosyl-[protein] + ADP + H(+). With respect to regulation, inhibited by the multi-targeted cancer drugs imatinib and ponatinib. Tyrosine kinase that functions as a cell surface receptor for fibrillar collagen and regulates cell attachment to the extracellular matrix, remodeling of the extracellular matrix, cell migration, differentiation, survival and cell proliferation. Collagen binding triggers a signaling pathway that involves SRC and leads to the activation of MAP kinases. Regulates remodeling of the extracellular matrix by up-regulation of the matrix metalloproteinases MMP2, MMP7 and MMP9, and thereby facilitates cell migration and wound healing. Required for normal blastocyst implantation during pregnancy, for normal mammary gland differentiation and normal lactation. Required for normal ear morphology and normal hearing. Promotes smooth muscle cell migration, and thereby contributes to arterial wound healing. Also plays a role in tumor cell invasion. Phosphorylates PTPN11. This is Epithelial discoidin domain-containing receptor 1 (DDR1) from Homo sapiens (Human).